A 258-amino-acid chain; its full sequence is 5'-nucleotidase SurE (258 aa).

The a divalent metal cation site is built by Asp-16, Asp-17, Ser-47, and Asn-99.

This sequence belongs to the SurE nucleotidase family. The cofactor is a divalent metal cation.

The protein resides in the cytoplasm. The catalysed reaction is a ribonucleoside 5'-phosphate + H2O = a ribonucleoside + phosphate. Its function is as follows. Nucleotidase that shows phosphatase activity on nucleoside 5'-monophosphates. The polypeptide is 5'-nucleotidase SurE (Coxiella burnetii (strain CbuK_Q154) (Coxiella burnetii (strain Q154))).